Consider the following 776-residue polypeptide: MVGLSAHHRPLGCRLLILFCLLHPGASGQPYPTSNTAGEEALSVQGVRGSSVELECRTGPAPMAVLWSFTPLGSLVLQPVAVTSGASSKVESGALALGVVSLRNSSLVIEELREGARGHFLCQTLLVSGGQVHTAYLYLMLTVLVPVSKPRVQLNDPSPVEGVSVVATCAVREGTEPLTFSWHHHMPQGPGEVLVGLSEPRLQLDPVNRTHLGWYTCSVSNVVNQLKSDGAFLDVIYGPDKPVITVEPLGFSEDGFWASEREEVTLSCLAASNPPSHYVWFRDDSQIHTGPTYIIASASRTHTGLYTCLAHNRHLDTHTQTTVQLIIYYPPEGQPSCAVLPTLGVVTLLCTWPGGFPNAQLHWEGPQGIGPSASGNVTWSYTTTGLPNGSIFSCTGQHPTLAMPIFCRVTLWEPPGSPTCWTTATVGDQYIMLSCEWPGGEPPAMLSWLDRQQSLGDLGSSQAVHLLQAQSDLAGREFTCQGSHPLTAPGSHCRLRLEVPQLTVAEPRVSVLEGEEAWLGCALQRGTPPAQLLWLGPQQQQLEGSTPGFILHPEGTHLRLQVRDADPAHHRGTYQCVARNALGNSSQSVLLEVLSECKGFVCPCGYPTPPNVTISRLTYRRQRREVQLQWAIYGPGNLTGFLVQQRASVPSSEAGAWEVAASDIEPESRDRRLGGLDPGVLYAFRILAMNHHTAGYPSEVKTPVDPAFSAYPAVLGAAGTGVVVALATSLLVFQYAARHPHTFPCTETASTTSSSDPIQESIDAPVNVTITVTATP.

Residues Met-1–Gly-28 form the signal peptide. 5 Ig-like domains span residues Pro-32–Met-140, Pro-150–Asp-234, Pro-242–Gln-324, Pro-399–Glu-498, and Pro-500–Glu-592. Intrachain disulfides connect Cys-56-Cys-122, Cys-169-Cys-217, Cys-268-Cys-308, Cys-435-Cys-480, and Cys-521-Cys-576. Positions Thr-608–Phe-708 constitute a Fibronectin type-III domain. Residues Asn-611 and Asn-637 are each glycosylated (N-linked (GlcNAc...) asparagine). A helical membrane pass occupies residues Ala-713–Phe-733.

The protein localises to the membrane. The polypeptide is V-set and immunoglobulin domain-containing protein 10-like 2 (Mus musculus (Mouse)).